Consider the following 952-residue polypeptide: Isoleucine--tRNA ligase (952 aa).

Positions 58–68 (PYANGDIHIGH) match the 'HIGH' region motif. Residue glutamate 576 coordinates L-isoleucyl-5'-AMP. The 'KMSKS' region signature appears at 617–621 (KMSKS). ATP is bound at residue lysine 620. The Zn(2+) site is built by cysteine 915, cysteine 918, cysteine 935, and cysteine 938.

This sequence belongs to the class-I aminoacyl-tRNA synthetase family. IleS type 1 subfamily. Monomer. It depends on Zn(2+) as a cofactor.

It localises to the cytoplasm. The catalysed reaction is tRNA(Ile) + L-isoleucine + ATP = L-isoleucyl-tRNA(Ile) + AMP + diphosphate. In terms of biological role, catalyzes the attachment of isoleucine to tRNA(Ile). As IleRS can inadvertently accommodate and process structurally similar amino acids such as valine, to avoid such errors it has two additional distinct tRNA(Ile)-dependent editing activities. One activity is designated as 'pretransfer' editing and involves the hydrolysis of activated Val-AMP. The other activity is designated 'posttransfer' editing and involves deacylation of mischarged Val-tRNA(Ile). The polypeptide is Isoleucine--tRNA ligase (Aliivibrio fischeri (strain MJ11) (Vibrio fischeri)).